Reading from the N-terminus, the 165-residue chain is Methyl-coenzyme M reductase II operon protein D (165 aa).

MCR is composed of three subunits: alpha, beta, and gamma. The function of protein D is not known.

The chain is Methyl-coenzyme M reductase II operon protein D (mrtD) from Methanothermus fervidus (strain ATCC 43054 / DSM 2088 / JCM 10308 / V24 S).